A 142-amino-acid polypeptide reads, in one-letter code: Large ribosomal subunit protein uL13 (142 aa).

The protein belongs to the universal ribosomal protein uL13 family. In terms of assembly, part of the 50S ribosomal subunit.

In terms of biological role, this protein is one of the early assembly proteins of the 50S ribosomal subunit, although it is not seen to bind rRNA by itself. It is important during the early stages of 50S assembly. This chain is Large ribosomal subunit protein uL13, found in Marinomonas sp. (strain MWYL1).